The chain runs to 633 residues: DNA repair protein XRCC1 (633 aa).

Ser-140 is modified (phosphoserine). Residue Lys-176 forms a Glycyl lysine isopeptide (Lys-Gly) (interchain with G-Cter in SUMO1); alternate linkage. Residue Lys-176 forms a Glycyl lysine isopeptide (Lys-Gly) (interchain with G-Cter in SUMO2); alternate linkage. Phosphothreonine is present on Thr-198. Residue Ser-199 is modified to Phosphoserine. At Thr-202 the chain carries Phosphothreonine. Phosphoserine is present on residues Ser-204, Ser-226, and Ser-241. Low complexity predominate over residues 221 to 231 (AASSASPVSRA). Residues 221–313 (AASSASPVSR…TEPRRPRAGP (93 aa)) are disordered. Over residues 240-257 (ESPKGKRKLDLNQEEKKT) the composition is skewed to basic and acidic residues. Thr-257 bears the Phosphothreonine mark. Ser-259 and Ser-266 each carry phosphoserine. Over residues 277 to 291 (APTRTPATAPVPARA) the composition is skewed to low complexity. At Thr-281 the chain carries Phosphothreonine. Positions 299-313 (PRGEGTEPRRPRAGP) are enriched in basic and acidic residues. In terms of domain architecture, BRCT 1 spans 315–403 (ELGKILQGVV…RRLPSQRYLM (89 aa)). Phosphoserine; by PRKDC is present on Ser-371. Disordered regions lie at residues 400-462 (RYLM…AASP), 471-490 (EGVQSEGQDNGAEDSGDTED), and 498-536 (QKEHRLPPGQEENGEDPYAGSTDENTDSEEHQEPPDLPV). Ser-408, Ser-409, Ser-410, and Ser-421 each carry phosphoserine. The span at 427-443 (KLPQKQPQTKTKPTQAA) shows a compositional bias: low complexity. Residues Ser-446 and Ser-447 each carry the phosphoserine modification. Residues Thr-453 and Thr-457 each carry the phosphothreonine modification. A phosphoserine mark is found at Ser-461 and Ser-485. The span at 481-490 (GAEDSGDTED) shows a compositional bias: acidic residues. Thr-488 is subject to Phosphothreonine. Phosphoserine is present on Ser-518. 2 positions are modified to phosphothreonine: Thr-519 and Thr-523. The 92-residue stretch at 538–629 (ELPDFFQGKH…KLLPHQLYGV (92 aa)) folds into the BRCT 2 domain.

Homodimer. Interacts with polynucleotide kinase (PNK), DNA polymerase-beta (POLB) and DNA ligase III (LIG3). Interacts with APTX and APLF. Interacts with APEX1; the interaction is induced by SIRT1 and increases with the acetylated form of APEX1. Interacts with (poly-ADP-ribosylated) PARP1. Phosphorylation of Ser-371 causes dimer dissociation. Phosphorylation by CK2 promotes interaction with APTX and APLF. Post-translationally, sumoylated. As to expression, expressed in fibroblasts, retinal pigmented epithelial cells and lymphoblastoid cells (at protein level).

Its subcellular location is the nucleus. It localises to the chromosome. Its function is as follows. Scaffold protein involved in DNA single-strand break repair by mediating the assembly of DNA break repair protein complexes. Negatively regulates ADP-ribosyltransferase activity of PARP1 during base-excision repair in order to prevent excessive PARP1 activity. Recognizes and binds poly-ADP-ribose chains: specifically binds auto-poly-ADP-ribosylated PARP1, limiting its activity. In Homo sapiens (Human), this protein is DNA repair protein XRCC1.